We begin with the raw amino-acid sequence, 137 residues long: Protein apnoia (137 aa).

Transmembrane regions (helical) follow at residues 7-27 (IVFA…QQQA), 55-75 (LVPG…LTVV), and 76-96 (SIKG…QMLS).

Interacts with crb.

The protein resides in the apical cell membrane. Functionally, transmembrane protein that plays a key role in trachea development by regulating crb localization and maintenance at the apical cell membrane. Required for anisotropic apical surface expansion important for tracheal tube elongation and lumen stability at larval stages. This chain is Protein apnoia, found in Drosophila melanogaster (Fruit fly).